A 276-amino-acid chain; its full sequence is NAD-capped RNA hydrolase NudC (276 aa).

R82 is a binding site for substrate. Positions 112 and 115 each coordinate Zn(2+). E125 is a binding site for substrate. Residues C130 and C133 each coordinate Zn(2+). Residue Y138 participates in substrate binding. Positions 139–262 constitute a Nudix hydrolase domain; the sequence is PRISPSMIVL…SIARYLIDVY (124 aa). Residues A172, E188, and E192 each contribute to the a divalent metal cation site. A Nudix box motif is present at residues 173–194; that stretch reads GFAEPGESAEDCLIREVREEVQ. 206-213 is a substrate binding site; it reads QCWPFPHS. E233 is an a divalent metal cation binding site. Substrate is bound at residue A255.

Belongs to the Nudix hydrolase family. NudC subfamily. As to quaternary structure, homodimer. The cofactor is Mg(2+). Mn(2+) is required as a cofactor. It depends on Zn(2+) as a cofactor.

It carries out the reaction a 5'-end NAD(+)-phospho-ribonucleoside in mRNA + H2O = a 5'-end phospho-adenosine-phospho-ribonucleoside in mRNA + beta-nicotinamide D-ribonucleotide + 2 H(+). The enzyme catalyses NAD(+) + H2O = beta-nicotinamide D-ribonucleotide + AMP + 2 H(+). It catalyses the reaction NADH + H2O = reduced beta-nicotinamide D-ribonucleotide + AMP + 2 H(+). MRNA decapping enzyme that specifically removes the nicotinamide adenine dinucleotide (NAD) cap from a subset of mRNAs by hydrolyzing the diphosphate linkage to produce nicotinamide mononucleotide (NMN) and 5' monophosphate mRNA. The NAD-cap is present at the 5'-end of some mRNAs and stabilizes RNA against 5'-processing. Has preference for mRNAs with a 5'-end purine. Catalyzes the hydrolysis of a broad range of dinucleotide pyrophosphates. This is NAD-capped RNA hydrolase NudC from Pseudomonas fluorescens (strain Pf0-1).